Reading from the N-terminus, the 234-residue chain is Leucyl/phenylalanyl-tRNA--protein transferase (234 aa).

This sequence belongs to the L/F-transferase family.

The protein localises to the cytoplasm. It catalyses the reaction N-terminal L-lysyl-[protein] + L-leucyl-tRNA(Leu) = N-terminal L-leucyl-L-lysyl-[protein] + tRNA(Leu) + H(+). The catalysed reaction is N-terminal L-arginyl-[protein] + L-leucyl-tRNA(Leu) = N-terminal L-leucyl-L-arginyl-[protein] + tRNA(Leu) + H(+). The enzyme catalyses L-phenylalanyl-tRNA(Phe) + an N-terminal L-alpha-aminoacyl-[protein] = an N-terminal L-phenylalanyl-L-alpha-aminoacyl-[protein] + tRNA(Phe). Functions in the N-end rule pathway of protein degradation where it conjugates Leu, Phe and, less efficiently, Met from aminoacyl-tRNAs to the N-termini of proteins containing an N-terminal arginine or lysine. The protein is Leucyl/phenylalanyl-tRNA--protein transferase of Shigella dysenteriae serotype 1 (strain Sd197).